Consider the following 525-residue polypeptide: GMP synthase [glutamine-hydrolyzing] (525 aa).

The region spanning 9 to 207 (RILILDFGSQ…VLQICQCEPL (199 aa)) is the Glutamine amidotransferase type-1 domain. Cysteine 86 serves as the catalytic Nucleophile. Active-site residues include histidine 181 and glutamate 183. The 193-residue stretch at 208–400 (WTPRNIIDQT…LGLPNAMLHR (193 aa)) folds into the GMPS ATP-PPase domain. 235-241 (SGGVDSA) serves as a coordination point for ATP.

Homodimer.

It catalyses the reaction XMP + L-glutamine + ATP + H2O = GMP + L-glutamate + AMP + diphosphate + 2 H(+). The protein operates within purine metabolism; GMP biosynthesis; GMP from XMP (L-Gln route): step 1/1. Its function is as follows. Catalyzes the synthesis of GMP from XMP. In Hamiltonella defensa subsp. Acyrthosiphon pisum (strain 5AT), this protein is GMP synthase [glutamine-hydrolyzing].